Consider the following 497-residue polypeptide: Glutamyl-tRNA reductase (497 aa).

Substrate-binding positions include 58-61 (TCNR), S118, 123-125 (EQQ), and Q129. The active-site Nucleophile is C59. NADP(+) is bound at residue 214–219 (GAGAMA). A compositionally biased stretch (polar residues) spans 461–477 (VTQPGQADSSAAQTAGT). Residues 461-486 (VTQPGQADSSAAQTAGTSARADQIPS) are disordered.

The protein belongs to the glutamyl-tRNA reductase family. As to quaternary structure, homodimer.

It catalyses the reaction (S)-4-amino-5-oxopentanoate + tRNA(Glu) + NADP(+) = L-glutamyl-tRNA(Glu) + NADPH + H(+). It functions in the pathway porphyrin-containing compound metabolism; protoporphyrin-IX biosynthesis; 5-aminolevulinate from L-glutamyl-tRNA(Glu): step 1/2. Functionally, catalyzes the NADPH-dependent reduction of glutamyl-tRNA(Glu) to glutamate 1-semialdehyde (GSA). The sequence is that of Glutamyl-tRNA reductase from Corynebacterium jeikeium (strain K411).